We begin with the raw amino-acid sequence, 197 residues long: Isochorismatase domain-containing protein 2 (197 aa).

Belongs to the isochorismatase family.

The sequence is that of Isochorismatase domain-containing protein 2 (isoc2) from Danio rerio (Zebrafish).